A 75-amino-acid polypeptide reads, in one-letter code: Venom serine protease inhibitor BiVSPI (75 aa).

The signal sequence occupies residues 1–20; the sequence is MSRILFVFLAVMAIFSTSFG. Intrachain disulfides connect Cys-23/Cys-55, Cys-32/Cys-51, Cys-35/Cys-47, Cys-39/Cys-75, and Cys-57/Cys-69. A TIL domain is found at 23–75; that stretch reads CGLNEEFKSCGSCEPTCAKPRVTICTMECKIGCQCKSGYLRNGEGTCVLPEKC.

It belongs to the serine protease inhibitor-like (TIL domain-containing) family. In terms of processing, may be O-glycosylated. In terms of tissue distribution, expressed by the venom gland (at protein level) and expressed in fat body.

It localises to the secreted. The protein localises to the target cell membrane. Its function is as follows. Antimicrobial venom serine protease inhibitor. Exhibits inhibitory activity against chymotrypsin (IC(50)=19.56 nM, Ki=15.24 nM) and microbial serine proteases, such as subtilisin A (IC(50)=6.57 nM, Ki=6.83 nM) and proteinase K (IC(50)=7.11 nM, Ki=7.02 nM). Has not activity against trypsin, plasmin, tPA, thrombin, factor Xa or elastase. Binds and inhibits Gram-positive bacteria (B.subtilis (MIC=29.45 uM), B.thuringiensis (MIC=91.03 uM)) and the entomopathogenic fungus B.bassiana (MIC=30.09 uM) but not to E.coli. In Bombus ignitus (Bumblebee), this protein is Venom serine protease inhibitor BiVSPI.